Here is a 196-residue protein sequence, read N- to C-terminus: Lipoprotein signal peptidase (196 aa).

The next 3 helical transmembrane spans lie at 43-63, 75-95, and 100-120; these read LMLK…GISF, AVFI…MVCS, and GFAG…DRLF. Active-site residues include aspartate 126 and aspartate 144. The chain crosses the membrane as a helical span at residues 135–155; that stretch reads YSFPVFNLADCFITIGVIILI.

This sequence belongs to the peptidase A8 family.

It localises to the cell inner membrane. It carries out the reaction Release of signal peptides from bacterial membrane prolipoproteins. Hydrolyzes -Xaa-Yaa-Zaa-|-(S,diacylglyceryl)Cys-, in which Xaa is hydrophobic (preferably Leu), and Yaa (Ala or Ser) and Zaa (Gly or Ala) have small, neutral side chains.. Its pathway is protein modification; lipoprotein biosynthesis (signal peptide cleavage). Functionally, this protein specifically catalyzes the removal of signal peptides from prolipoproteins. This Rickettsia canadensis (strain McKiel) protein is Lipoprotein signal peptidase.